The sequence spans 131 residues: Small ribosomal subunit protein uS8 (131 aa).

Belongs to the universal ribosomal protein uS8 family. In terms of assembly, part of the 30S ribosomal subunit. Contacts proteins S5 and S12.

In terms of biological role, one of the primary rRNA binding proteins, it binds directly to 16S rRNA central domain where it helps coordinate assembly of the platform of the 30S subunit. This chain is Small ribosomal subunit protein uS8, found in Acidovorax sp. (strain JS42).